Here is a 1040-residue protein sequence, read N- to C-terminus: Multidrug resistance protein MdtB (1040 aa).

12 helical membrane passes run 16–36, 342–362, 369–389, 396–416, 440–460, 472–492, 537–557, 863–883, 888–908, 911–931, 968–988, and 998–1018; these read FIMRPVATTLLMVAILLAGII, DTQFELMLAIALVVMIIYLFL, IIPGVAVPLSLVGTFAVMVFL, LTLMALTIATGFVVDDAIVVI, IGFTIISLTFSLIAVLIPLLF, FAVTLAVAILISAVVSLTLTP, WLTLGVALSTLALSIILWVFI, LGSTVWLVVAAVVAMYIVLGV, FIHPITILSTLPTAGVGALLA, LAGSELDVIAIIGIILLIGIV, ILMTTLAALLGALPLMLSTGV, and IGMVGGLMLSQVLTLFTTPVI.

The protein belongs to the resistance-nodulation-cell division (RND) (TC 2.A.6) family. MdtB subfamily. Part of a tripartite efflux system composed of MdtA, MdtB and MdtC. MdtB forms a heteromultimer with MdtC.

Its subcellular location is the cell inner membrane. This Klebsiella pneumoniae subsp. pneumoniae (strain ATCC 700721 / MGH 78578) protein is Multidrug resistance protein MdtB.